We begin with the raw amino-acid sequence, 403 residues long: Glucose-signaling factor 2 (403 aa).

At 1-177 the chain is on the lumenal side; that stretch reads MEIYIRLNAD…QEVQANYSSL (177 aa). Asn89 and Asn173 each carry an N-linked (GlcNAc...) asparagine glycan. Residues 178–198 form a helical; Signal-anchor for type II membrane protein membrane-spanning segment; sequence VAQWLFFVMHIFKVGIITLFL. At 199 to 403 the chain is on the cytoplasmic side; the sequence is KLGIANPISF…IKKNDLKKSN (205 aa). A coiled-coil region spans residues 330-388; it reads ELENNLKKILEEYDGDIGKMNAEIRRFRRFGIYEPDEKLASLVKLRREIADEKEKASNN.

It localises to the endoplasmic reticulum membrane. May be involved in the secretion of hexose transporters from the endoplasmic reticulum. Involved in secretion of GAL2 and HXT1. This chain is Glucose-signaling factor 2 (GSF2), found in Saccharomyces cerevisiae (strain ATCC 204508 / S288c) (Baker's yeast).